We begin with the raw amino-acid sequence, 239 residues long: 4-hydroxy-tetrahydrodipicolinate reductase (239 aa).

Residues 8 to 13, 78 to 80, and 102 to 105 contribute to the NAD(+) site; these read GSTGKM, GTT, and SANM. His-134 (proton donor/acceptor) is an active-site residue. His-135 is a binding site for (S)-2,3,4,5-tetrahydrodipicolinate. Catalysis depends on Lys-138, which acts as the Proton donor. (S)-2,3,4,5-tetrahydrodipicolinate is bound at residue 144–145; sequence GT.

It belongs to the DapB family.

The protein resides in the cytoplasm. The enzyme catalyses (S)-2,3,4,5-tetrahydrodipicolinate + NAD(+) + H2O = (2S,4S)-4-hydroxy-2,3,4,5-tetrahydrodipicolinate + NADH + H(+). The catalysed reaction is (S)-2,3,4,5-tetrahydrodipicolinate + NADP(+) + H2O = (2S,4S)-4-hydroxy-2,3,4,5-tetrahydrodipicolinate + NADPH + H(+). It functions in the pathway amino-acid biosynthesis; L-lysine biosynthesis via DAP pathway; (S)-tetrahydrodipicolinate from L-aspartate: step 4/4. Functionally, catalyzes the conversion of 4-hydroxy-tetrahydrodipicolinate (HTPA) to tetrahydrodipicolinate. The sequence is that of 4-hydroxy-tetrahydrodipicolinate reductase from Rickettsia peacockii (strain Rustic).